Consider the following 247-residue polypeptide: uncharacterized protein (247 aa).

2 helical membrane passes run Leu-11–Val-31 and Phe-39–Leu-59.

It localises to the cell membrane. This is an uncharacterized protein from Haemophilus influenzae (strain ATCC 51907 / DSM 11121 / KW20 / Rd).